An 843-amino-acid polypeptide reads, in one-letter code: Protein P (843 aa).

Residues 1–177 (MPLSYPHFRK…FCGSPYSWEQ (177 aa)) form a terminal protein domain (TP) region. A spacer region spans residues 178–346 (ELQHGSTSIN…YCLSHIINLL (169 aa)). 2 disordered regions span residues 180–221 (QHGS…FQQS) and 282–313 (REKT…GSVR). Polar residues predominate over residues 196-221 (SLCTQSSGILSRPSAGSSIQGKFQQS). The segment at 347–690 (EDWGPCYEHG…YMHLYPVARQ (344 aa)) is polymerase/reverse transcriptase domain (RT). Positions 357-600 (QHHIRTPRTP…YTLNFMGYVI (244 aa)) constitute a Reverse transcriptase domain. Mg(2+) is bound by residues Asp429, Asp551, and Asp552.

Belongs to the hepadnaviridae P protein family.

It catalyses the reaction DNA(n) + a 2'-deoxyribonucleoside 5'-triphosphate = DNA(n+1) + diphosphate. The catalysed reaction is Endonucleolytic cleavage to 5'-phosphomonoester.. With respect to regulation, activated by host HSP70 and HSP40 in vitro to be able to bind the epsilon loop of the pgRNA. Because deletion of the RNase H region renders the protein partly chaperone-independent, the chaperones may be needed indirectly to relieve occlusion of the RNA-binding site by this domain. Inhibited by several reverse-transcriptase inhibitors: Lamivudine, Adefovir and Entecavir. Its function is as follows. Multifunctional enzyme that converts the viral RNA genome into dsDNA in viral cytoplasmic capsids. This enzyme displays a DNA polymerase activity that can copy either DNA or RNA templates, and a ribonuclease H (RNase H) activity that cleaves the RNA strand of RNA-DNA heteroduplexes in a partially processive 3'- to 5'-endonucleasic mode. Neo-synthesized pregenomic RNA (pgRNA) are encapsidated together with the P protein, and reverse-transcribed inside the nucleocapsid. Initiation of reverse-transcription occurs first by binding the epsilon loop on the pgRNA genome, and is initiated by protein priming, thereby the 5'-end of (-)DNA is covalently linked to P protein. Partial (+)DNA is synthesized from the (-)DNA template and generates the relaxed circular DNA (RC-DNA) genome. After budding and infection, the RC-DNA migrates in the nucleus, and is converted into a plasmid-like covalently closed circular DNA (cccDNA). The activity of P protein does not seem to be necessary for cccDNA generation, and is presumably released from (+)DNA by host nuclear DNA repair machinery. The polypeptide is Protein P (Homo sapiens (Human)).